A 454-amino-acid polypeptide reads, in one-letter code: MSLEIVILAAGQGTRMRSALPKVLHPIAGKPMLGHVIDCARQLQPERIHVVIGHGADLVRERMAADDLNFVLQAEQLGTGHAVAQALPFLSADQVLILYGDVPLIQLDTLQRLLAQVTPDQLSLLTVDMLDPTGYGRIVRDDQGAVQAIVEHKDATPAQRQIGEINTGILAVPGKRLADWLGRLSNDNAQGEYYLTDVIAMAVGDGLVVASAQPLDAMEVQGVNDRMQQAQLERHYQRLRAEELMRQGVTLLDPQRLDVRGEISVGRDVLIDVNVVLEGRVVIEDDVRIGPNCVIRDSVLRRGAVIKANSHLEGAELGEGSDAGPFARLRPGSVLGARAHVGNFVELKNARLGEGSKAGHLSYLGDAELGANCNIGAGTITCNYDGANKFRTELGDDVFIGSNNSLVAPLKIGDGATTAAGSTITHEVPAKNLAFGRARQKNLENWKRPEKIKK.

The interval 1–226 (MSLEIVILAA…AMEVQGVNDR (226 aa)) is pyrophosphorylase. UDP-N-acetyl-alpha-D-glucosamine is bound by residues 8–11 (LAAG), Lys22, Gln73, 78–79 (GT), 99–101 (YGD), Gly136, Glu151, Asn166, and Asn224. Asp101 serves as a coordination point for Mg(2+). Asn224 contributes to the Mg(2+) binding site. The interval 227-247 (MQQAQLERHYQRLRAEELMRQ) is linker. The N-acetyltransferase stretch occupies residues 248–454 (GVTLLDPQRL…NWKRPEKIKK (207 aa)). 2 residues coordinate UDP-N-acetyl-alpha-D-glucosamine: Arg330 and Lys348. Catalysis depends on His360, which acts as the Proton acceptor. The UDP-N-acetyl-alpha-D-glucosamine site is built by Tyr363 and Asn374. Acetyl-CoA contacts are provided by residues Ala377, 383–384 (NY), Ser402, Ala420, and Arg437.

It in the N-terminal section; belongs to the N-acetylglucosamine-1-phosphate uridyltransferase family. The protein in the C-terminal section; belongs to the transferase hexapeptide repeat family. Homotrimer. Mg(2+) serves as cofactor.

It is found in the cytoplasm. The enzyme catalyses alpha-D-glucosamine 1-phosphate + acetyl-CoA = N-acetyl-alpha-D-glucosamine 1-phosphate + CoA + H(+). The catalysed reaction is N-acetyl-alpha-D-glucosamine 1-phosphate + UTP + H(+) = UDP-N-acetyl-alpha-D-glucosamine + diphosphate. Its pathway is nucleotide-sugar biosynthesis; UDP-N-acetyl-alpha-D-glucosamine biosynthesis; N-acetyl-alpha-D-glucosamine 1-phosphate from alpha-D-glucosamine 6-phosphate (route II): step 2/2. It participates in nucleotide-sugar biosynthesis; UDP-N-acetyl-alpha-D-glucosamine biosynthesis; UDP-N-acetyl-alpha-D-glucosamine from N-acetyl-alpha-D-glucosamine 1-phosphate: step 1/1. It functions in the pathway bacterial outer membrane biogenesis; LPS lipid A biosynthesis. Catalyzes the last two sequential reactions in the de novo biosynthetic pathway for UDP-N-acetylglucosamine (UDP-GlcNAc). The C-terminal domain catalyzes the transfer of acetyl group from acetyl coenzyme A to glucosamine-1-phosphate (GlcN-1-P) to produce N-acetylglucosamine-1-phosphate (GlcNAc-1-P), which is converted into UDP-GlcNAc by the transfer of uridine 5-monophosphate (from uridine 5-triphosphate), a reaction catalyzed by the N-terminal domain. This Pseudomonas aeruginosa (strain ATCC 15692 / DSM 22644 / CIP 104116 / JCM 14847 / LMG 12228 / 1C / PRS 101 / PAO1) protein is Bifunctional protein GlmU.